We begin with the raw amino-acid sequence, 394 residues long: Elongation factor Tu (394 aa).

Positions 10-204 (KPHVNVGTIG…ALDSYIPEPQ (195 aa)) constitute a tr-type G domain. A G1 region spans residues 19–26 (GHVDHGKT). 19–26 (GHVDHGKT) provides a ligand contact to GTP. Thr26 contributes to the Mg(2+) binding site. Residues 60 to 64 (GITIN) form a G2 region. Residues 81-84 (DCPG) form a G3 region. GTP-binding positions include 81 to 85 (DCPGH) and 136 to 139 (NKCD). A G4 region spans residues 136–139 (NKCD). A G5 region spans residues 174-176 (SAL).

This sequence belongs to the TRAFAC class translation factor GTPase superfamily. Classic translation factor GTPase family. EF-Tu/EF-1A subfamily. In terms of assembly, monomer.

The protein localises to the cytoplasm. The catalysed reaction is GTP + H2O = GDP + phosphate + H(+). GTP hydrolase that promotes the GTP-dependent binding of aminoacyl-tRNA to the A-site of ribosomes during protein biosynthesis. This is Elongation factor Tu from Shewanella baltica (strain OS185).